Here is a 285-residue protein sequence, read N- to C-terminus: Nucleotide-binding protein in ptsN-ptsO intergenic region (285 aa).

Residue 8 to 15 (GRSGSGKS) coordinates ATP. 60–63 (DARN) is a GTP binding site.

This sequence belongs to the RapZ-like family.

Its function is as follows. Displays ATPase and GTPase activities. The protein is Nucleotide-binding protein in ptsN-ptsO intergenic region of Stutzerimonas stutzeri (Pseudomonas stutzeri).